The primary structure comprises 89 residues: Small ribosomal subunit protein uS15 (89 aa).

The protein belongs to the universal ribosomal protein uS15 family. As to quaternary structure, part of the 30S ribosomal subunit. Forms a bridge to the 50S subunit in the 70S ribosome, contacting the 23S rRNA.

Functionally, one of the primary rRNA binding proteins, it binds directly to 16S rRNA where it helps nucleate assembly of the platform of the 30S subunit by binding and bridging several RNA helices of the 16S rRNA. Its function is as follows. Forms an intersubunit bridge (bridge B4) with the 23S rRNA of the 50S subunit in the ribosome. This chain is Small ribosomal subunit protein uS15, found in Streptococcus pneumoniae (strain P1031).